Reading from the N-terminus, the 209-residue chain is Thiamine-phosphate synthase (209 aa).

4-amino-2-methyl-5-(diphosphooxymethyl)pyrimidine contacts are provided by residues 35 to 39 (QYRDK) and Asn-67. The Mg(2+) site is built by Asp-68 and Asp-86. Thr-105 is a 4-amino-2-methyl-5-(diphosphooxymethyl)pyrimidine binding site. 2-[(2R,5Z)-2-carboxy-4-methylthiazol-5(2H)-ylidene]ethyl phosphate is bound at residue 132-134 (SNT). 4-amino-2-methyl-5-(diphosphooxymethyl)pyrimidine is bound at residue Lys-135. Gly-162 is a binding site for 2-[(2R,5Z)-2-carboxy-4-methylthiazol-5(2H)-ylidene]ethyl phosphate.

This sequence belongs to the thiamine-phosphate synthase family. Mg(2+) is required as a cofactor.

The enzyme catalyses 2-[(2R,5Z)-2-carboxy-4-methylthiazol-5(2H)-ylidene]ethyl phosphate + 4-amino-2-methyl-5-(diphosphooxymethyl)pyrimidine + 2 H(+) = thiamine phosphate + CO2 + diphosphate. It carries out the reaction 2-(2-carboxy-4-methylthiazol-5-yl)ethyl phosphate + 4-amino-2-methyl-5-(diphosphooxymethyl)pyrimidine + 2 H(+) = thiamine phosphate + CO2 + diphosphate. The catalysed reaction is 4-methyl-5-(2-phosphooxyethyl)-thiazole + 4-amino-2-methyl-5-(diphosphooxymethyl)pyrimidine + H(+) = thiamine phosphate + diphosphate. It participates in cofactor biosynthesis; thiamine diphosphate biosynthesis; thiamine phosphate from 4-amino-2-methyl-5-diphosphomethylpyrimidine and 4-methyl-5-(2-phosphoethyl)-thiazole: step 1/1. Condenses 4-methyl-5-(beta-hydroxyethyl)thiazole monophosphate (THZ-P) and 2-methyl-4-amino-5-hydroxymethyl pyrimidine pyrophosphate (HMP-PP) to form thiamine monophosphate (TMP). In Pseudomonas fluorescens (strain SBW25), this protein is Thiamine-phosphate synthase.